The primary structure comprises 501 residues: Cytochrome P450 monooxygenase 76AD131 (501 aa).

A helical transmembrane segment spans residues 1-21 (MGYYAIFAVVLPFLWTCFYLL). Asparagine 115 and asparagine 264 each carry an N-linked (GlcNAc...) asparagine glycan. Heme is bound at residue cysteine 444.

Belongs to the cytochrome P450 family. The cofactor is heme. In terms of tissue distribution, highly expressed in aerial parts, in both skin and flesh tissues.

The protein localises to the membrane. The catalysed reaction is tyramine + reduced [NADPH--hemoprotein reductase] + O2 = dopamine + oxidized [NADPH--hemoprotein reductase] + H2O + H(+). It catalyses the reaction 3-methoxytyramine + reduced [NADPH--hemoprotein reductase] + O2 = 3,4-dihydroxy-5-methoxyphenethylamine + oxidized [NADPH--hemoprotein reductase] + H2O + H(+). Its pathway is aromatic compound metabolism. It participates in alkaloid biosynthesis. Functionally, cytochrome P450 monooxygenase participating in the biosynthesis of natural products derived from phenylethylamine, including mescaline, a natural hallucinogen potentially used in psychotherapeutic treatments. Catalyzes the hydroxylation of tyramine to dopamine and of 3-methoxytyramine to 3,4-dihydroxy-5-methoxyphenethylamine. The polypeptide is Cytochrome P450 monooxygenase 76AD131 (Lophophora williamsii (Peyote)).